A 317-amino-acid polypeptide reads, in one-letter code: Putative HTH-type transcriptional regulatory protein NP_1320A (317 aa).

In terms of domain architecture, HTH cro/C1-type spans 132-189 (LSDIRSQEDMSLGKLANELGVSRRTVSKYEDGMSASVEVAAELEEIFDRKLASPVEVL). The segment at residues 143 to 162 (LGKLANELGVSRRTVSKYED) is a DNA-binding region (H-T-H motif).

This Natronomonas pharaonis (strain ATCC 35678 / DSM 2160 / CIP 103997 / JCM 8858 / NBRC 14720 / NCIMB 2260 / Gabara) (Halobacterium pharaonis) protein is Putative HTH-type transcriptional regulatory protein NP_1320A.